Here is a 744-residue protein sequence, read N- to C-terminus: Phosphoribosylformylglycinamidine synthase subunit PurL (744 aa).

H50 is a catalytic residue. The ATP site is built by Y53 and K92. E94 serves as a coordination point for Mg(2+). Substrate contacts are provided by residues 95 to 98 (SHNH) and R117. H96 acts as the Proton acceptor in catalysis. D118 lines the Mg(2+) pocket. Q241 provides a ligand contact to substrate. D269 contacts Mg(2+). 313 to 315 (ESQ) is a substrate binding site. The ATP site is built by D494 and G531. N532 contributes to the Mg(2+) binding site. S534 is a binding site for substrate.

It belongs to the FGAMS family. In terms of assembly, monomer. Part of the FGAM synthase complex composed of 1 PurL, 1 PurQ and 2 PurS subunits.

It is found in the cytoplasm. It catalyses the reaction N(2)-formyl-N(1)-(5-phospho-beta-D-ribosyl)glycinamide + L-glutamine + ATP + H2O = 2-formamido-N(1)-(5-O-phospho-beta-D-ribosyl)acetamidine + L-glutamate + ADP + phosphate + H(+). It participates in purine metabolism; IMP biosynthesis via de novo pathway; 5-amino-1-(5-phospho-D-ribosyl)imidazole from N(2)-formyl-N(1)-(5-phospho-D-ribosyl)glycinamide: step 1/2. Its function is as follows. Part of the phosphoribosylformylglycinamidine synthase complex involved in the purines biosynthetic pathway. Catalyzes the ATP-dependent conversion of formylglycinamide ribonucleotide (FGAR) and glutamine to yield formylglycinamidine ribonucleotide (FGAM) and glutamate. The FGAM synthase complex is composed of three subunits. PurQ produces an ammonia molecule by converting glutamine to glutamate. PurL transfers the ammonia molecule to FGAR to form FGAM in an ATP-dependent manner. PurS interacts with PurQ and PurL and is thought to assist in the transfer of the ammonia molecule from PurQ to PurL. The protein is Phosphoribosylformylglycinamidine synthase subunit PurL of Chelativorans sp. (strain BNC1).